A 154-amino-acid chain; its full sequence is Ribonuclease 8 (154 aa).

Residues 1–27 (MAPARAGCCPLLLLLLGLWVAQIPVSA) form the signal peptide. H42 serves as the catalytic Proton acceptor. 2 disulfides stabilise this stretch: C64–C118 and C89–C96. Residues 65–69 (KDLNT) and K90 each bind substrate. Catalysis depends on H149, which acts as the Proton donor.

Belongs to the pancreatic ribonuclease family.

Its subcellular location is the secreted. In terms of biological role, has a low ribonuclease activity. The sequence is that of Ribonuclease 8 (RNASE8) from Chlorocebus aethiops (Green monkey).